A 481-amino-acid chain; its full sequence is Small ribosomal subunit protein bS1 (481 aa).

4 S1 motif domains span residues 36–105 (GDIV…LSKK), 123–188 (DEAV…LSRR), 209–277 (GTIR…LSLK), and 294–363 (GQIV…LSLK). The disordered stretch occupies residues 429–467 (TAQMEKFAAAEAAGRGADDQSSASSAPSEKTAGGSLASD). Positions 437-456 (AAEAAGRGADDQSSASSAPS) are enriched in low complexity.

It belongs to the bacterial ribosomal protein bS1 family.

Binds mRNA; thus facilitating recognition of the initiation point. It is needed to translate mRNA with a short Shine-Dalgarno (SD) purine-rich sequence. This Mycobacterium tuberculosis (strain CDC 1551 / Oshkosh) protein is Small ribosomal subunit protein bS1 (rpsA).